A 67-amino-acid chain; its full sequence is Large ribosomal subunit protein bL35 (67 aa).

A compositionally biased stretch (basic residues) spans 1–16 (MPKMKTKKSAAKRFRV). Positions 1–22 (MPKMKTKKSAAKRFRVRPGGTV) are disordered.

Belongs to the bacterial ribosomal protein bL35 family.

This chain is Large ribosomal subunit protein bL35, found in Methylibium petroleiphilum (strain ATCC BAA-1232 / LMG 22953 / PM1).